Consider the following 475-residue polypeptide: MALNACTKLPVARLIRPSASYHPAISSIRYYSAPPESTIPAAKLKYIPTSGTYPKGFLVSGTHVGVKPTNKSTPDLAFLASETPCAAAAVFTKNKFQAAPVTVSRKMLQRRSNTGIRSVIINSGCANAVTGKGGMEDAEKMGAEADRCFDTPSDGKGGSSIVMSTGVIGQRLPIQKILLKIPTAFDGLGSSHEHWLATATAICTTDTFPKLLSRTFSLPSSPEVEYRMAGMTKGAGMIHPNMATLLGMIATDAPIAPTLLPSLLTKAVNKSFNSISIDGDTSTNDTVAVLANGAAGGKEVTSESSEDHAAFQKVLTEFATDLAKLVVRDGEGATKFVTIRVTEAPSEIGARKIASTIARSPLVKTALYGKDANWGRILCATGYSQISEPGQPINEVPEIIPEKTSVSFIPSDGSPELKLLVNGEPESVDEARAAEILEHEDLEILIKLGGGKEEAVYWTCDFSHEYVTINGDYRT.

6 residues coordinate substrate: Thr-204, Lys-233, Thr-244, Glu-331, Asn-470, and Thr-475. The active-site Nucleophile is Thr-244.

It belongs to the ArgJ family. In terms of assembly, heterodimer of an alpha and a beta chain. Post-translationally, the alpha and beta chains are autoproteolytically processed from a single precursor protein within the mitochondrion.

Its subcellular location is the mitochondrion matrix. The enzyme catalyses N(2)-acetyl-L-ornithine + L-glutamate = N-acetyl-L-glutamate + L-ornithine. It catalyses the reaction L-glutamate + acetyl-CoA = N-acetyl-L-glutamate + CoA + H(+). It participates in amino-acid biosynthesis; L-arginine biosynthesis; L-ornithine and N-acetyl-L-glutamate from L-glutamate and N(2)-acetyl-L-ornithine (cyclic): step 1/1. It functions in the pathway amino-acid biosynthesis; L-arginine biosynthesis; N(2)-acetyl-L-ornithine from L-glutamate: step 1/4. Its function is as follows. Catalyzes two activities which are involved in the cyclic version of arginine biosynthesis: the synthesis of acetylglutamate from glutamate and acetyl-CoA, and of ornithine by transacetylation between acetylornithine and glutamate. This chain is Arginine biosynthesis bifunctional protein ArgJ 1, mitochondrial, found in Botryotinia fuckeliana (strain B05.10) (Noble rot fungus).